Here is a 361-residue protein sequence, read N- to C-terminus: Spermatogenesis-associated protein 17 (361 aa).

IQ domains lie at 32-61 (ENDA…IVTI), 55-84 (LNRI…VAYY), and 91-120 (YNAM…LKEY).

It is found in the cytoplasm. The polypeptide is Spermatogenesis-associated protein 17 (SPATA17) (Homo sapiens (Human)).